A 179-amino-acid chain; its full sequence is ATP-dependent protease subunit HslV (179 aa).

T7 is an active-site residue. Residues G162, C165, and T168 each contribute to the Na(+) site.

It belongs to the peptidase T1B family. HslV subfamily. In terms of assembly, a double ring-shaped homohexamer of HslV is capped on each side by a ring-shaped HslU homohexamer. The assembly of the HslU/HslV complex is dependent on binding of ATP.

Its subcellular location is the cytoplasm. The catalysed reaction is ATP-dependent cleavage of peptide bonds with broad specificity.. Its activity is regulated as follows. Allosterically activated by HslU binding. Protease subunit of a proteasome-like degradation complex believed to be a general protein degrading machinery. This is ATP-dependent protease subunit HslV from Aromatoleum aromaticum (strain DSM 19018 / LMG 30748 / EbN1) (Azoarcus sp. (strain EbN1)).